Here is a 179-residue protein sequence, read N- to C-terminus: Replication restart protein DnaT (179 aa).

Residues 156 to 179 form a disordered region; it reads GGLPKRDVNTVSEPDSQIPPGFRG.

Belongs to the DnaT family. Homooligomerizes. Interacts with PriB. Component of the replication restart primosome. Primosome assembly occurs via a 'hand-off' mechanism. PriA binds to replication forks, subsequently PriB then DnaT bind; DnaT then displaces ssDNA to generate the helicase loading substrate.

Its function is as follows. Involved in the restart of stalled replication forks, which reloads the replicative helicase on sites other than the origin of replication. Can function in multiple replication restart pathways. Displaces ssDNA from a PriB-ssDNA complex. Probably forms a spiral filament on ssDNA. The chain is Replication restart protein DnaT from Escherichia coli (strain ATCC 8739 / DSM 1576 / NBRC 3972 / NCIMB 8545 / WDCM 00012 / Crooks).